Here is a 447-residue protein sequence, read N- to C-terminus: Peptide-N(4)-(N-acetyl-beta-glucosaminyl)asparagine amidase (447 aa).

Zn(2+)-binding residues include Cys-209, Cys-212, Cys-241, and Cys-244. Cys-267 (nucleophile) is an active-site residue. Residues His-294 and Asp-311 contribute to the active site.

It belongs to the transglutaminase-like superfamily. PNGase family. Requires Zn(2+) as cofactor.

It is found in the cytoplasm. The enzyme catalyses Hydrolysis of an N(4)-(acetyl-beta-D-glucosaminyl)asparagine residue in which the glucosamine residue may be further glycosylated, to yield a (substituted) N-acetyl-beta-D-glucosaminylamine and a peptide containing an aspartate residue.. Functionally, specifically deglycosylates the denatured form of N-linked glycoproteins in the cytoplasm and assists their proteasome-mediated degradation. Cleaves the beta-aspartyl-glucosamine (GlcNAc) of the glycan and the amide side chain of Asn, converting Asn to Asp. Prefers proteins containing high-mannose over those bearing complex type oligosaccharides. Can recognize misfolded proteins in the endoplasmic reticulum that are exported to the cytosol to be destroyed and deglycosylate them, while it has no activity toward native proteins. Deglycosylation is a prerequisite for subsequent proteasome-mediated degradation of some, but not all, misfolded glycoproteins. This is Peptide-N(4)-(N-acetyl-beta-glucosaminyl)asparagine amidase (PNG1) from Oryza sativa subsp. japonica (Rice).